The primary structure comprises 372 residues: MKKGFSLPLWVTGAAKSAIKKLIGLPFEDYELIKIPKEKNLIKIKVHSAGLINEESQALGISFVDSGLDLDLTQNLEIWTIASLEKTYKTSNRPLDRINIIPGYGVGIDQKTSKICISDFAQKLLVENLLNIIPEGYTLNLEIVFPNGKFLAERTSNKSFGIVEGLSIIGTSAETFASASPDQLQNAKAQLKQIIANKVCDTIIFVIGENGLNLATSSNIKFPIIKVGNWIGPLLVDAAIQKIKTVILFGYHGKLIKLAGGIFHTHNHLADARIEILVYLAVKEEVPLEIIQKLSQSNTVEDALLVLESFSLSMADKLWNKLSDTIEKRSTEYINRYTKTDMKVGAIIFDRNRKIRWSGNNSKDYISAFKGF.

The protein belongs to the CbiD family.

The catalysed reaction is Co-precorrin-5B + S-adenosyl-L-methionine = Co-precorrin-6A + S-adenosyl-L-homocysteine. Its pathway is cofactor biosynthesis; adenosylcobalamin biosynthesis; cob(II)yrinate a,c-diamide from sirohydrochlorin (anaerobic route): step 6/10. In terms of biological role, catalyzes the methylation of C-1 in cobalt-precorrin-5B to form cobalt-precorrin-6A. The polypeptide is Cobalt-precorrin-5B C(1)-methyltransferase (Prochlorococcus marinus subsp. pastoris (strain CCMP1986 / NIES-2087 / MED4)).